A 251-amino-acid chain; its full sequence is Ubiquinone/menaquinone biosynthesis C-methyltransferase UbiE (251 aa).

S-adenosyl-L-methionine-binding positions include Thr-74, Asp-95, and 123–124 (NA).

It belongs to the class I-like SAM-binding methyltransferase superfamily. MenG/UbiE family.

The enzyme catalyses a 2-demethylmenaquinol + S-adenosyl-L-methionine = a menaquinol + S-adenosyl-L-homocysteine + H(+). The catalysed reaction is a 2-methoxy-6-(all-trans-polyprenyl)benzene-1,4-diol + S-adenosyl-L-methionine = a 5-methoxy-2-methyl-3-(all-trans-polyprenyl)benzene-1,4-diol + S-adenosyl-L-homocysteine + H(+). It functions in the pathway quinol/quinone metabolism; menaquinone biosynthesis; menaquinol from 1,4-dihydroxy-2-naphthoate: step 2/2. Its pathway is cofactor biosynthesis; ubiquinone biosynthesis. Its function is as follows. Methyltransferase required for the conversion of demethylmenaquinol (DMKH2) to menaquinol (MKH2) and the conversion of 2-polyprenyl-6-methoxy-1,4-benzoquinol (DDMQH2) to 2-polyprenyl-3-methyl-6-methoxy-1,4-benzoquinol (DMQH2). In Psychromonas ingrahamii (strain DSM 17664 / CCUG 51855 / 37), this protein is Ubiquinone/menaquinone biosynthesis C-methyltransferase UbiE.